The sequence spans 433 residues: C2H2 type master regulator of conidiophore development brlA (433 aa).

Disordered regions lie at residues 23–54 (PSEC…SMAS) and 238–268 (TFKS…RMSG). A compositionally biased stretch (low complexity) spans 30-48 (TSSFSPLDSPTPTPTSLYS). Residues 238–264 (TFKSHTPSTPHRSVSMGTPSGSDTPVS) are compositionally biased toward polar residues. 2 C2H2-type zinc fingers span residues 321-345 (FKCK…MKSH) and 351-376 (HVCW…TKTH). Residues 391-423 (ETSQDFDPDFRGQLTPDGRPIYGSKLEDSMPDC) are disordered.

It localises to the nucleus. In terms of biological role, brlA, abaA and wetA are pivotal regulators of conidiophore development and conidium maturation. They act individually and together to regulate their own expression and that of numerous other sporulation-specific genes. Binds promoters of target genes at brlA response elements (BREs) containing the conserved sequence 5'-(C/A)(A/G)AGGG(G/A)-3'. This chain is C2H2 type master regulator of conidiophore development brlA, found in Penicillium camemberti (strain FM 013).